We begin with the raw amino-acid sequence, 459 residues long: Putrescine aminotransferase (459 aa).

Pyridoxal 5'-phosphate-binding positions include 150 to 151 (GT) and glutamine 274. Residue lysine 300 is modified to N6-(pyridoxal phosphate)lysine. Threonine 332 lines the pyridoxal 5'-phosphate pocket.

The protein belongs to the class-III pyridoxal-phosphate-dependent aminotransferase family. Putrescine aminotransferase subfamily. Pyridoxal 5'-phosphate is required as a cofactor.

The catalysed reaction is an alkane-alpha,omega-diamine + 2-oxoglutarate = an omega-aminoaldehyde + L-glutamate. It catalyses the reaction putrescine + 2-oxoglutarate = 1-pyrroline + L-glutamate + H2O. It carries out the reaction cadaverine + 2-oxoglutarate = 5-aminopentanal + L-glutamate. The protein operates within amine and polyamine degradation; putrescine degradation; 4-aminobutanal from putrescine (transaminase route): step 1/1. In terms of biological role, catalyzes the aminotransferase reaction from putrescine to 2-oxoglutarate, leading to glutamate and 4-aminobutanal, which spontaneously cyclizes to form 1-pyrroline. This is the first step in one of two pathways for putrescine degradation, where putrescine is converted into 4-aminobutanoate (gamma-aminobutyrate or GABA) via 4-aminobutanal. Also functions as a cadaverine transaminase in a a L-lysine degradation pathway to succinate that proceeds via cadaverine, glutarate and L-2-hydroxyglutarate. The chain is Putrescine aminotransferase from Escherichia coli O8 (strain IAI1).